The primary structure comprises 275 residues: Fructose-2,6-bisphosphatase TIGAR (275 aa).

H11 serves as the catalytic Tele-phosphohistidine intermediate. The active-site Proton donor/acceptor is the E89.

It belongs to the phosphoglycerate mutase family.

The protein localises to the cytoplasm. It is found in the nucleus. It localises to the mitochondrion. The catalysed reaction is beta-D-fructose 2,6-bisphosphate + H2O = beta-D-fructose 6-phosphate + phosphate. In terms of biological role, fructose-bisphosphatase hydrolyzing fructose-2,6-bisphosphate as well as fructose-1,6-bisphosphate. Acts as a negative regulator of glycolysis by lowering intracellular levels of fructose-2,6-bisphosphate in a p53/TP53-dependent manner, resulting in the pentose phosphate pathway (PPP) activation and NADPH production. Contributes to the generation of reduced glutathione to cause a decrease in intracellular reactive oxygen species (ROS) content, correlating with its ability to protect cells from oxidative or metabolic stress-induced cell death. May play a role in mitophagy inhibition. The polypeptide is Fructose-2,6-bisphosphatase TIGAR (Xenopus tropicalis (Western clawed frog)).